The sequence spans 263 residues: Oxidoreductase tpcG (263 aa).

The protein belongs to the avfA family. In terms of tissue distribution, specifically expressed in conidia.

It functions in the pathway secondary metabolite biosynthesis. Functionally, oxidoreductase; part of the gene cluster that mediates the biosynthesis of trypacidin, a mycotoxin with antiprotozoal activity and that plays a role in the infection process. The pathway begins with the synthesis of atrochrysone thioester by the polyketide synthase (PKS) tpcC. The atrochrysone carboxyl ACP thioesterase tpcB then breaks the thioester bond and releases the atrochrysone carboxylic acid from tpcC. The decarboxylase tpcK converts atrochrysone carboxylic acid to atrochrysone which is further reduced into emodin anthrone. The next step is performed by the emodin anthrone oxygenase tpcL that catalyzes the oxidation of emodinanthrone to emodin. Emodin O-methyltransferase encoded by tpcA catalyzes methylation of the 8-hydroxy group of emodin to form questin. Ring cleavage of questin by questin oxidase tpcI leads to desmethylsulochrin via several intermediates including questin epoxide. Another methylation step catalyzed by tpcM leads to the formation of sulochrin which is further converted to monomethylsulfochrin by tpcH. Finally, the tpcJ catalyzes the conversion of monomethylsulfochrin to trypacidin. Trypacidin is toxic for human pulmonary and bronchial epithelial cells by initiating the intracellular formation of nitric oxide (NO) and hydrogen peroxide (H(2)O(2)), thus triggering host necrotic cell death. The trypacidin pathway is also able to produce endocrocin via a distinct route from the endocrocin Enc pathway. The polypeptide is Oxidoreductase tpcG (Aspergillus fumigatus (strain ATCC MYA-4609 / CBS 101355 / FGSC A1100 / Af293) (Neosartorya fumigata)).